The sequence spans 39 residues: Photosystem II reaction center protein Psb30 (39 aa).

The helical transmembrane segment at 12–32 (IFQLTFVALIMLAGPFVIFLL) threads the bilayer.

It belongs to the Psb30/Ycf12 family. In terms of assembly, PSII is composed of 1 copy each of membrane proteins PsbA, PsbB, PsbC, PsbD, PsbE, PsbF, PsbH, PsbI, PsbJ, PsbK, PsbL, PsbM, PsbT, PsbX, PsbY, PsbZ, Psb30/Ycf12, peripheral proteins PsbO, CyanoQ (PsbQ), PsbU, PsbV and a large number of cofactors. It forms dimeric complexes.

Its subcellular location is the cellular thylakoid membrane. A core subunit of photosystem II (PSII), probably helps stabilize the reaction center. The protein is Photosystem II reaction center protein Psb30 of Microcystis aeruginosa (strain NIES-843 / IAM M-2473).